A 243-amino-acid polypeptide reads, in one-letter code: uncharacterized protein (243 aa).

An N-terminal signal peptide occupies residues 1–16; sequence MKLLALVALCAVGVAS. Asn55 carries N-linked (GlcNAc...) asparagine glycosylation. Disordered stretches follow at residues 95-126 and 208-235; these read SQGR…EKPS and NQQQ…KPTV. 2 stretches are compositionally biased toward low complexity: residues 99-112 and 209-229; these read NQQQ…SQGG and QQQQ…STTL. A disulfide bridge connects residues Cys141 and Cys239.

Belongs to the protease inhibitor I33 family.

It localises to the secreted. This is an uncharacterized protein from Caenorhabditis elegans.